Reading from the N-terminus, the 405-residue chain is CRS2-associated factor 1, mitochondrial (405 aa).

Residues 1-20 constitute a mitochondrion transit peptide; it reads MFLIRLSRHNPSSFTLLTRR. Positions 32 to 75 are disordered; that stretch reads RDLYNFQSPPPLSSSASENPDFNQKNNNKKKPKPQYRPPSSLEG. 2 consecutive CRM domains span residues 157 to 255 and 277 to 373; these read ASLT…KRPK and DGLS…KEDD. The interval 384–405 is disordered; that stretch reads SIDSDVDLSCSRGAQDSPDETT.

As to quaternary structure, part of large ribonucleo-protein complexes that include group IIB introns.

The protein localises to the mitochondrion. Its function is as follows. May be involved in the splicing of group IIB introns in mitochondria. The chain is CRS2-associated factor 1, mitochondrial from Arabidopsis thaliana (Mouse-ear cress).